We begin with the raw amino-acid sequence, 513 residues long: ATP synthase subunit alpha (513 aa).

Position 169-176 (169-176) interacts with ATP; that stretch reads GDRQTGKT.

It belongs to the ATPase alpha/beta chains family. F-type ATPases have 2 components, CF(1) - the catalytic core - and CF(0) - the membrane proton channel. CF(1) has five subunits: alpha(3), beta(3), gamma(1), delta(1), epsilon(1). CF(0) has three main subunits: a(1), b(2) and c(9-12). The alpha and beta chains form an alternating ring which encloses part of the gamma chain. CF(1) is attached to CF(0) by a central stalk formed by the gamma and epsilon chains, while a peripheral stalk is formed by the delta and b chains.

It is found in the cell inner membrane. The catalysed reaction is ATP + H2O + 4 H(+)(in) = ADP + phosphate + 5 H(+)(out). Produces ATP from ADP in the presence of a proton gradient across the membrane. The alpha chain is a regulatory subunit. This is ATP synthase subunit alpha from Haemophilus ducreyi (strain 35000HP / ATCC 700724).